The sequence spans 185 residues: Ribosome-recycling factor (185 aa).

It belongs to the RRF family.

It is found in the cytoplasm. In terms of biological role, responsible for the release of ribosomes from messenger RNA at the termination of protein biosynthesis. May increase the efficiency of translation by recycling ribosomes from one round of translation to another. The polypeptide is Ribosome-recycling factor (Finegoldia magna (strain ATCC 29328 / DSM 20472 / WAL 2508) (Peptostreptococcus magnus)).